The chain runs to 374 residues: Chaperone protein DnaJ (374 aa).

Residues 5-70 enclose the J domain; the sequence is DYYEILGVSR…QKRAAYDQYG (66 aa). Residues 129–207 form a CR-type zinc finger; that stretch reads GVTREIRIPT…CHGHGRVEKS (79 aa). Cysteine 142, cysteine 145, cysteine 159, cysteine 162, cysteine 181, cysteine 184, cysteine 195, and cysteine 198 together coordinate Zn(2+). 4 CXXCXGXG motif repeats span residues 142-149, 159-166, 181-188, and 195-202; these read CDVCHGSG, CPTCHGQG, CPTCQGQG, and CTKCHGHG.

This sequence belongs to the DnaJ family. In terms of assembly, homodimer. The cofactor is Zn(2+).

The protein localises to the cytoplasm. Functionally, participates actively in the response to hyperosmotic and heat shock by preventing the aggregation of stress-denatured proteins and by disaggregating proteins, also in an autonomous, DnaK-independent fashion. Unfolded proteins bind initially to DnaJ; upon interaction with the DnaJ-bound protein, DnaK hydrolyzes its bound ATP, resulting in the formation of a stable complex. GrpE releases ADP from DnaK; ATP binding to DnaK triggers the release of the substrate protein, thus completing the reaction cycle. Several rounds of ATP-dependent interactions between DnaJ, DnaK and GrpE are required for fully efficient folding. Also involved, together with DnaK and GrpE, in the DNA replication of plasmids through activation of initiation proteins. The polypeptide is Chaperone protein DnaJ (Sodalis glossinidius (strain morsitans)).